The sequence spans 55 residues: ATP synthase protein 8 (55 aa).

The helical transmembrane segment at 7 to 24 threads the bilayer; that stretch reads NPWFFIMIISWLTYSMII. The interval 34-55 is disordered; it reads TNPPARKEPTTNTTTPWNWPWT. Residues 43 to 55 show a composition bias toward low complexity; the sequence is TTNTTTPWNWPWT.

This sequence belongs to the ATPase protein 8 family. As to quaternary structure, F-type ATPases have 2 components, CF(1) - the catalytic core - and CF(0) - the membrane proton channel.

The protein localises to the mitochondrion membrane. Its function is as follows. Mitochondrial membrane ATP synthase (F(1)F(0) ATP synthase or Complex V) produces ATP from ADP in the presence of a proton gradient across the membrane which is generated by electron transport complexes of the respiratory chain. F-type ATPases consist of two structural domains, F(1) - containing the extramembraneous catalytic core and F(0) - containing the membrane proton channel, linked together by a central stalk and a peripheral stalk. During catalysis, ATP synthesis in the catalytic domain of F(1) is coupled via a rotary mechanism of the central stalk subunits to proton translocation. Part of the complex F(0) domain. Minor subunit located with subunit a in the membrane. This Vireo altiloquus (Black-whiskered vireo) protein is ATP synthase protein 8 (MT-ATP8).